We begin with the raw amino-acid sequence, 330 residues long: Tryptophan--tRNA ligase (330 aa).

ATP is bound by residues 10–12 and 18–19; these read QTT and GN. The 'HIGH' region signature appears at 11 to 19; that stretch reads TTGALHLGN. Residue Asp134 coordinates L-tryptophan. ATP contacts are provided by residues 146–148, Ile186, and 195–199; these read GED and KMSKS. Residues 195–199 carry the 'KMSKS' region motif; it reads KMSKS.

Belongs to the class-I aminoacyl-tRNA synthetase family. Homodimer.

Its subcellular location is the cytoplasm. The catalysed reaction is tRNA(Trp) + L-tryptophan + ATP = L-tryptophyl-tRNA(Trp) + AMP + diphosphate + H(+). Its function is as follows. Catalyzes the attachment of tryptophan to tRNA(Trp). The chain is Tryptophan--tRNA ligase from Rickettsia typhi (strain ATCC VR-144 / Wilmington).